Consider the following 172-residue polypeptide: Disulfide bond formation protein B (172 aa).

Residues 1–13 lie on the Cytoplasmic side of the membrane; it reads MNWLAQLPTQRTP. Residues 14–30 form a helical membrane-spanning segment; that stretch reads WLLFSGIVFLLEITALF. The Periplasmic portion of the chain corresponds to 31–48; that stretch reads FQYKMGLAPCIMCIYQRT. A disulfide bridge connects residues Cys40 and Cys43. The helical transmembrane segment at 49–64 threads the bilayer; sequence AVLGLLIAGIIGTSNP. At 65–71 the chain is on the cytoplasmic side; that stretch reads EHRGVRL. The helical transmembrane segment at 72–89 threads the bilayer; the sequence is LAYSVWAVSSVWGFIIAR. Residues 90-145 are Periplasmic-facing; that stretch reads EHIEMQTTTDPFAFSCEFEPNFPAFMPLHEWIPSFFAATGDCGNIDWQFAGLSMPA. A disulfide bond links Cys105 and Cys131. A helical membrane pass occupies residues 146-164; that stretch reads WMEVIFALFAATLFLLVTS. At 165 to 172 the chain is on the cytoplasmic side; that stretch reads RLMTKRSL.

This sequence belongs to the DsbB family.

It localises to the cell inner membrane. In terms of biological role, required for disulfide bond formation in some periplasmic proteins. Acts by oxidizing the DsbA protein. The protein is Disulfide bond formation protein B of Pseudoalteromonas translucida (strain TAC 125).